The sequence spans 1375 residues: DNA-directed RNA polymerase subunit beta' (1375 aa).

Zn(2+)-binding residues include Cys70, Cys72, Cys85, and Cys88. Mg(2+)-binding residues include Asp460, Asp462, and Asp464. Positions 800, 874, 881, and 884 each coordinate Zn(2+).

This sequence belongs to the RNA polymerase beta' chain family. In terms of assembly, the RNAP catalytic core consists of 2 alpha, 1 beta, 1 beta' and 1 omega subunit. When a sigma factor is associated with the core the holoenzyme is formed, which can initiate transcription. The cofactor is Mg(2+). Requires Zn(2+) as cofactor.

The catalysed reaction is RNA(n) + a ribonucleoside 5'-triphosphate = RNA(n+1) + diphosphate. Functionally, DNA-dependent RNA polymerase catalyzes the transcription of DNA into RNA using the four ribonucleoside triphosphates as substrates. This chain is DNA-directed RNA polymerase subunit beta', found in Bdellovibrio bacteriovorus (strain ATCC 15356 / DSM 50701 / NCIMB 9529 / HD100).